The chain runs to 114 residues: UPF0339 protein plu2779 (114 aa).

2 consecutive repeat copies span residues 11-59 and 62-110.

This sequence belongs to the UPF0339 family. Duplicated subfamily.

The protein is UPF0339 protein plu2779 of Photorhabdus laumondii subsp. laumondii (strain DSM 15139 / CIP 105565 / TT01) (Photorhabdus luminescens subsp. laumondii).